Here is a 334-residue protein sequence, read N- to C-terminus: Cytoskeleton protein RodZ (334 aa).

Residues 1–111 (MNTEATHDQN…LGKRRKKRDG (111 aa)) lie on the Cytoplasmic side of the membrane. The region spanning 19–71 (LRNAREQLGLSQQAVAERLCLKVSTVRDIEEDKAPSDLASTFLRGYIRSYARL) is the HTH cro/C1-type domain. Positions 30–49 (QQAVAERLCLKVSTVRDIEE) form a DNA-binding region, H-T-H motif. The helical; Signal-anchor for type II membrane protein transmembrane segment at 112-132 (WLMSFTWLVLFVVVGLTGAWW) threads the bilayer. Residues 133–334 (WQNHKAHQEE…TLNAEPTPAQ (202 aa)) are Periplasmic-facing. The tract at residues 152-210 (AGLNADKDSGQSVPLDTGAVTSQDTTPAQTAPAPATPVDSTAATQTPAPTAAATQNTVV) is disordered. Positions 161–175 (GQSVPLDTGAVTSQD) are enriched in polar residues. Over residues 176–210 (TTPAQTAPAPATPVDSTAATQTPAPTAAATQNTVV) the composition is skewed to low complexity.

This sequence belongs to the RodZ family.

It localises to the cell inner membrane. Functionally, cytoskeletal protein that is involved in cell-shape control through regulation of the length of the long axis. This Salmonella gallinarum (strain 287/91 / NCTC 13346) protein is Cytoskeleton protein RodZ.